An 86-amino-acid polypeptide reads, in one-letter code: Putative defensin-like protein 211 (86 aa).

An N-terminal signal peptide occupies residues 1–19 (MNTIVLFLTLLILVSSCTS). Intrachain disulfides connect Cys-55-Cys-72, Cys-58-Cys-77, and Cys-62-Cys-79.

It belongs to the DEFL family.

It localises to the secreted. The chain is Putative defensin-like protein 211 from Arabidopsis thaliana (Mouse-ear cress).